The primary structure comprises 42 residues: Delta-hexatoxin-Ar1a (42 aa).

4 disulfide bridges follow: Cys1–Cys15, Cys8–Cys20, Cys14–Cys31, and Cys16–Cys42.

This sequence belongs to the neurotoxin 06 (delta-actx) family. In terms of tissue distribution, expressed by the venom gland.

It is found in the secreted. Functionally, inhibits tetrodotoxin-sensitive voltage-gated sodium channels (Nav) by binding to site 3. It slows the inactivation, causes a prolongation of action potential duration resulting in repetitive firing in autonomic and motor nerve fibers. Does not depolarize the resting potential. Does not affect tetrodotoxin-resistant sodium channels. This lethal neurotoxin is active on both insect and mammalian voltage-gated sodium channels. The sequence is that of Delta-hexatoxin-Ar1a from Atrax robustus (Sydney funnel-web spider).